The sequence spans 283 residues: Acetylglutamate kinase (283 aa).

Residues 63-64 (GG), R85, and N178 each bind substrate.

Belongs to the acetylglutamate kinase family. ArgB subfamily.

It is found in the plastid. It localises to the chloroplast. The catalysed reaction is N-acetyl-L-glutamate + ATP = N-acetyl-L-glutamyl 5-phosphate + ADP. It participates in amino-acid biosynthesis; L-arginine biosynthesis; N(2)-acetyl-L-ornithine from L-glutamate: step 2/4. In terms of biological role, catalyzes the ATP-dependent phosphorylation of N-acetyl-L-glutamate. The protein is Acetylglutamate kinase of Porphyra purpurea (Red seaweed).